A 214-amino-acid chain; its full sequence is Ribosomal RNA large subunit methyltransferase E (214 aa).

S-adenosyl-L-methionine is bound by residues G60, W62, D86, D102, and D127. The active-site Proton acceptor is K167.

It belongs to the class I-like SAM-binding methyltransferase superfamily. RNA methyltransferase RlmE family.

Its subcellular location is the cytoplasm. The enzyme catalyses uridine(2552) in 23S rRNA + S-adenosyl-L-methionine = 2'-O-methyluridine(2552) in 23S rRNA + S-adenosyl-L-homocysteine + H(+). Specifically methylates the uridine in position 2552 of 23S rRNA at the 2'-O position of the ribose in the fully assembled 50S ribosomal subunit. In Herminiimonas arsenicoxydans, this protein is Ribosomal RNA large subunit methyltransferase E.